The sequence spans 878 residues: Bifunctional heparan sulfate N-deacetylase/N-sulfotransferase 1 (878 aa).

Residues 1 to 17 (MSLSLKTRRFGRPVRPQ) are Cytoplasmic-facing. Residues 1–169 (MSLSLKTRRF…VEYGVGIIGF (169 aa)) form a sufficient for localization to Golgi membrane region. Residues 18-38 (LVLLLLFALCLLSVFISAYYL) traverse the membrane as a helical; Signal-anchor for type II membrane protein segment. Over 39 to 878 (YGWKRGLEPS…WLREELQSTR (840 aa)) the chain is Lumenal. The tract at residues 40–594 (GWKRGLEPSG…KRHKDIWSKE (555 aa)) is heparan sulfate N-deacetylase 1. Residues 47–71 (PSGSEAQSPDCDEPKISPSRLLPMK) are disordered. 3 N-linked (GlcNAc...) asparagine glycosylation sites follow: asparagine 231, asparagine 347, and asparagine 397. The heparan sulfate N-sulfotransferase 1 stretch occupies residues 595-878 (KTCDRFPKLL…WLREELQSTR (284 aa)). The active-site For sulfotransferase activity is lysine 610. 610–614 (KTGTT) contributes to the adenosine 3',5'-bisphosphate binding site. N-linked (GlcNAc...) asparagine glycosylation is present at asparagine 663. The adenosine 3',5'-bisphosphate site is built by serine 708 and tryptophan 813. A disulfide bridge connects residues cysteine 814 and cysteine 824. 829–833 (KGRKY) lines the adenosine 3',5'-bisphosphate pocket.

Belongs to the sulfotransferase 1 family. NDST subfamily. Monomer.

The protein resides in the golgi apparatus membrane. The protein localises to the golgi apparatus. It is found in the trans-Golgi network membrane. It catalyses the reaction alpha-D-glucosaminyl-[heparan sulfate](n) + 3'-phosphoadenylyl sulfate = N-sulfo-alpha-D-glucosaminyl-[heparan sulfate](n) + adenosine 3',5'-bisphosphate + 2 H(+). The protein operates within glycan metabolism; heparan sulfate biosynthesis. It participates in glycan metabolism; heparin biosynthesis. In terms of biological role, essential bifunctional enzyme that catalyzes both the N-deacetylation and the N-sulfation of glucosamine (GlcNAc) of the glycosaminoglycan in heparan sulfate. Modifies the GlcNAc-GlcA disaccharide repeating sugar backbone to make N-sulfated heparosan, a prerequisite substrate for later modifications in heparin biosynthesis. Plays a role in determining the extent and pattern of sulfation of heparan sulfate. This Xenopus tropicalis (Western clawed frog) protein is Bifunctional heparan sulfate N-deacetylase/N-sulfotransferase 1 (ndst1).